The primary structure comprises 424 residues: 3-phosphoshikimate 1-carboxyvinyltransferase (424 aa).

The 3-phosphoshikimate site is built by Lys21, Ser22, and Arg26. Lys21 contributes to the phosphoenolpyruvate binding site. Residues Gly92 and Arg120 each contribute to the phosphoenolpyruvate site. Ser163, Ser164, Gln165, Ser191, Asp306, and Lys333 together coordinate 3-phosphoshikimate. Gln165 serves as a coordination point for phosphoenolpyruvate. The Proton acceptor role is filled by Asp306. Phosphoenolpyruvate is bound by residues Arg337, Arg379, and Lys405.

It belongs to the EPSP synthase family. Monomer.

Its subcellular location is the cytoplasm. It carries out the reaction 3-phosphoshikimate + phosphoenolpyruvate = 5-O-(1-carboxyvinyl)-3-phosphoshikimate + phosphate. It functions in the pathway metabolic intermediate biosynthesis; chorismate biosynthesis; chorismate from D-erythrose 4-phosphate and phosphoenolpyruvate: step 6/7. Functionally, catalyzes the transfer of the enolpyruvyl moiety of phosphoenolpyruvate (PEP) to the 5-hydroxyl of shikimate-3-phosphate (S3P) to produce enolpyruvyl shikimate-3-phosphate and inorganic phosphate. The chain is 3-phosphoshikimate 1-carboxyvinyltransferase from Clostridium perfringens (strain ATCC 13124 / DSM 756 / JCM 1290 / NCIMB 6125 / NCTC 8237 / Type A).